The following is a 544-amino-acid chain: Lipid II flippase MurJ (544 aa).

Helical transmembrane passes span 21 to 41, 49 to 69, 90 to 110, 127 to 147, 169 to 189, 191 to 211, 241 to 261, 297 to 317, 338 to 358, 375 to 395, 404 to 424, 431 to 451, 471 to 491, and 500 to 520; these read ILGM…GGAL, YTLF…KFVS, VMLV…PMFA, VVYV…MSLV, IVRI…FNGG, VIAV…GLVV, MFFE…AIPL, LVMI…PTIT, TILF…GPTY, ILLW…NAAI, FAVV…VPLI, GAIL…FIMI, VLSA…GFFI, and AAIV…YCGY.

The protein belongs to the polysaccharide synthase family.

It is found in the cell membrane. The protein operates within cell wall biogenesis; peptidoglycan biosynthesis. Involved in peptidoglycan biosynthesis. Transports lipid-linked peptidoglycan precursors from the inner to the outer leaflet of the cytoplasmic membrane. Not essential for growth. The sequence is that of Lipid II flippase MurJ from Bacillus subtilis (strain 168).